Consider the following 309-residue polypeptide: Ferredoxin--NADP reductase (309 aa).

The FAD site is built by Asp-25, Gln-33, Tyr-38, Val-77, Phe-107, Asp-267, and Thr-307.

This sequence belongs to the ferredoxin--NADP reductase type 2 family. As to quaternary structure, homodimer. FAD serves as cofactor.

The enzyme catalyses 2 reduced [2Fe-2S]-[ferredoxin] + NADP(+) + H(+) = 2 oxidized [2Fe-2S]-[ferredoxin] + NADPH. This chain is Ferredoxin--NADP reductase, found in Lactobacillus acidophilus (strain ATCC 700396 / NCK56 / N2 / NCFM).